The chain runs to 245 residues: Ribonuclease 3 (245 aa).

In terms of domain architecture, RNase III spans 17–146 (FTDKMKSLGL…FVGALYLDQG (130 aa)). A Mg(2+)-binding site is contributed by glutamate 59. Residue aspartate 63 is part of the active site. Residues aspartate 132 and glutamate 135 each contribute to the Mg(2+) site. Glutamate 135 is a catalytic residue. In terms of domain architecture, DRBM spans 172-241 (DFKTQFQEYV…AEQAYKLMKN (70 aa)).

The protein belongs to the ribonuclease III family. Homodimer. Mg(2+) is required as a cofactor.

The protein resides in the cytoplasm. It catalyses the reaction Endonucleolytic cleavage to 5'-phosphomonoester.. Its function is as follows. Digests double-stranded RNA. Involved in the processing of primary rRNA transcript to yield the immediate precursors to the large and small rRNAs (23S and 16S). Processes some mRNAs, and tRNAs when they are encoded in the rRNA operon. Processes pre-crRNA and tracrRNA of type II CRISPR loci if present in the organism. The polypeptide is Ribonuclease 3 (Staphylococcus epidermidis (strain ATCC 35984 / DSM 28319 / BCRC 17069 / CCUG 31568 / BM 3577 / RP62A)).